The following is a 150-amino-acid chain: Regulatory protein RecX (150 aa).

This sequence belongs to the RecX family.

It localises to the cytoplasm. Modulates RecA activity. This chain is Regulatory protein RecX, found in Legionella pneumophila (strain Corby).